The sequence spans 81 residues: UPF0248 protein SSO2687 (81 aa).

It belongs to the UPF0248 family.

The sequence is that of UPF0248 protein SSO2687 from Saccharolobus solfataricus (strain ATCC 35092 / DSM 1617 / JCM 11322 / P2) (Sulfolobus solfataricus).